The sequence spans 287 residues: Nucleotide-binding protein TGRD_433 (287 aa).

Position 9-16 (9-16 (GMSGAGKS)) interacts with ATP. 60-63 (DSRA) contacts GTP.

Belongs to the RapZ-like family.

Functionally, displays ATPase and GTPase activities. This chain is Nucleotide-binding protein TGRD_433, found in Endomicrobium trichonymphae.